A 975-amino-acid chain; its full sequence is 5'-3' exoribonuclease 2 homolog (975 aa).

The segment at 262–279 adopts a CCHC-type zinc-finger fold; sequence RACDLCGQYGHELKECRG. 2 disordered regions span residues 424–443 and 505–532; these read MQMY…GRGQ and SPAD…EGPK. An interaction with paxt-1 region spans residues 534–787; the sequence is DIRLYESGWK…GICVLYEDPE (254 aa). The segment covering 804–821 has biased composition (basic and acidic residues); the sequence is EPEKTLKPDDWNDRRDGR. The tract at residues 804 to 975 is disordered; it reads EPEKTLKPDD…GGYHGNSSWR (172 aa). 3 stretches are compositionally biased toward gly residues: residues 850–860, 886–895, and 908–932; these read RGGGGGGGGYR, NYGGRDGGGP, and GYQG…GGGS.

This sequence belongs to the 5'-3' exonuclease family. XRN2/RAT1 subfamily. Interacts with paxt-1 (via N-terminus); the interaction is direct and results in stabilization of xrn-2 in the complex. Expressed in the pharyngeal myoepithelium and intestine. Also expressed in several anterior neurons including the sensory neurons, as well as the interneuron PVT and the pharyngeal motorneuron M5.

It localises to the nucleus. Possesses 5'-&gt;3' exoribonuclease activity. Plays a role in maintenance of steady-state concentration and turnover of microRNAs (miRNA) by degradation of mature miRNA. Degradation role is enhanced when in complex with paxt-1. Partially redundant to xrn-1 in miRNA guide strand degradation. Implicated in differential regulation of mRNAs such as let-7 by controlling the accumulation of mature miRNA. Positively regulates molting of the pharyngeal cuticle. This Caenorhabditis elegans protein is 5'-3' exoribonuclease 2 homolog.